The primary structure comprises 331 residues: Glutaminase (331 aa).

Serine 77, asparagine 129, glutamate 173, asparagine 180, tyrosine 204, tyrosine 256, and valine 274 together coordinate substrate.

The protein belongs to the glutaminase family. Homotetramer.

It catalyses the reaction L-glutamine + H2O = L-glutamate + NH4(+). The protein is Glutaminase of Oceanobacillus iheyensis (strain DSM 14371 / CIP 107618 / JCM 11309 / KCTC 3954 / HTE831).